The chain runs to 179 residues: Macro domain-containing protein XCC3184 (179 aa).

One can recognise a Macro domain in the interval 1-175 (MRIEVWQGDI…AYHQALATQE (175 aa)).

It belongs to the MacroD-type family.

This is Macro domain-containing protein XCC3184 from Xanthomonas campestris pv. campestris (strain ATCC 33913 / DSM 3586 / NCPPB 528 / LMG 568 / P 25).